We begin with the raw amino-acid sequence, 365 residues long: Histidinol-phosphate aminotransferase 2 (365 aa).

Lysine 222 carries the post-translational modification N6-(pyridoxal phosphate)lysine.

Belongs to the class-II pyridoxal-phosphate-dependent aminotransferase family. Histidinol-phosphate aminotransferase subfamily. Homodimer. It depends on pyridoxal 5'-phosphate as a cofactor.

The enzyme catalyses L-histidinol phosphate + 2-oxoglutarate = 3-(imidazol-4-yl)-2-oxopropyl phosphate + L-glutamate. Its pathway is amino-acid biosynthesis; L-histidine biosynthesis; L-histidine from 5-phospho-alpha-D-ribose 1-diphosphate: step 7/9. This is Histidinol-phosphate aminotransferase 2 (hisC2) from Bordetella parapertussis (strain 12822 / ATCC BAA-587 / NCTC 13253).